Consider the following 206-residue polypeptide: MSSLVLIPCALLTQGIYAGLIGAISTVTMSACSAIRSIYNYKNADVNHIIKLLDIERKLIIIQSILNITTNSDTLSGKTPLELTDLEKTHVFELIKKKTDLTKDPIQLCLIFLHEAIENIHKDLSVIHEKIDYHNNKWFNYWRSLNIKHLITNLEADIIIMNERFDYLMKISAFLDHIKDSKKQINSMRWNLSNPIDRKLLFQSLD.

Residues 1–18 (MSSLVLIPCALLTQGIYA) form the signal peptide.

This is an uncharacterized protein from Acanthamoeba polyphaga mimivirus (APMV).